The chain runs to 236 residues: Leucyl/phenylalanyl-tRNA--protein transferase (236 aa).

This sequence belongs to the L/F-transferase family.

It localises to the cytoplasm. It carries out the reaction N-terminal L-lysyl-[protein] + L-leucyl-tRNA(Leu) = N-terminal L-leucyl-L-lysyl-[protein] + tRNA(Leu) + H(+). It catalyses the reaction N-terminal L-arginyl-[protein] + L-leucyl-tRNA(Leu) = N-terminal L-leucyl-L-arginyl-[protein] + tRNA(Leu) + H(+). The enzyme catalyses L-phenylalanyl-tRNA(Phe) + an N-terminal L-alpha-aminoacyl-[protein] = an N-terminal L-phenylalanyl-L-alpha-aminoacyl-[protein] + tRNA(Phe). Its function is as follows. Functions in the N-end rule pathway of protein degradation where it conjugates Leu, Phe and, less efficiently, Met from aminoacyl-tRNAs to the N-termini of proteins containing an N-terminal arginine or lysine. This chain is Leucyl/phenylalanyl-tRNA--protein transferase, found in Vibrio atlanticus (strain LGP32) (Vibrio splendidus (strain Mel32)).